The chain runs to 339 residues: UDP-galactose transporter homolog 1 (339 aa).

Over 1 to 4 (MAGS) the chain is Lumenal. Residues 5–25 (TSSLVICAIGIYATFLTWALV) traverse the membrane as a helical segment. The Cytoplasmic segment spans residues 26–42 (QEPLATRTWPNSMGKFQ). A helical membrane pass occupies residues 43–63 (FPNVISLIQASVAMMMGYLYL). At 64–106 (NWKKVEYPPRKMIKDHWKQLMLISFTQSSSGPLATTSLKHVDY) the chain is on the lumenal side. Residues 107 to 127 (LTYMLAKSCKMIPVLLVHLLL) form a helical membrane-spanning segment. At 128-136 (YRTPIASQK) the chain is on the cytoplasmic side. The chain crosses the membrane as a helical span at residues 137-157 (KVVALLVSLGVTIFTIGGNDG). The Lumenal segment spans residues 158-174 (KKLKRSFNESGNDNKLQ). N-linked (GlcNAc...) asparagine glycosylation occurs at asparagine 165. A helical transmembrane segment spans residues 175-192 (GFGLLFSSLFLDGLTNAT). Topologically, residues 193–214 (QDKLLKANKAKEKGKQTLITGA) are cytoplasmic. The helical transmembrane segment at 215–235 (HLMFTLNLFVILWNILYFIVI) threads the bilayer. Over 236-245 (DCKQWDNAVS) the chain is Lumenal. The helical transmembrane segment at 246–266 (VLTMDPQVWGYLMLYSFCGAM) threads the bilayer. At 267-280 (GQCFIFYTLEQFGS) the chain is on the cytoplasmic side. Residues 281 to 303 (LVLIMITVTRKMVSMILSIIVFG) form a helical membrane-spanning segment. The Lumenal segment spans residues 304-307 (KSVR). A helical membrane pass occupies residues 308–327 (FQQWVGMFIVFGGITWEALN). At 328-339 (KKKANIPKAKSA) the chain is on the cytoplasmic side.

This sequence belongs to the nucleotide-sugar transporter family. SLC35B subfamily.

It is found in the endoplasmic reticulum membrane. Functionally, may be involved in specific transport of UDP-Gal from the cytosol to the Golgi lumen. Involved in the maintenance of optimal conditions for the folding of secretory pathway proteins in the endoplasmic reticulum. Overexpression confers resistance to the immunosuppressive drug, leflunomide. The polypeptide is UDP-galactose transporter homolog 1 (HUT1) (Saccharomyces cerevisiae (strain ATCC 204508 / S288c) (Baker's yeast)).